Consider the following 68-residue polypeptide: U2-agatoxin-Ao1u (68 aa).

An N-terminal signal peptide occupies residues 1 to 20 (MKAIISLLLISAMVFSMIEA). The propeptide occupies 21-34 (VPLEEGLQLFEGER). Intrachain disulfides connect Cys-36/Cys-52, Cys-43/Cys-57, and Cys-51/Cys-67.

Belongs to the neurotoxin 01 (U2-agtx) family. In terms of tissue distribution, expressed by the venom gland.

The protein resides in the secreted. Functionally, insect active toxin causing rapid but reversible paralysis in crickets. No activity shown in mammals. Does not show effect on mammalian voltage-gated calcium channels. This is U2-agatoxin-Ao1u from Agelena orientalis (Funnel-web spider).